The following is a 67-amino-acid chain: Small ribosomal subunit protein eS27 (67 aa).

Zn(2+)-binding residues include cysteine 22, cysteine 25, cysteine 41, and cysteine 44. The C4-type zinc-finger motif lies at cysteine 22–cysteine 44.

Belongs to the eukaryotic ribosomal protein eS27 family. As to quaternary structure, part of the 30S ribosomal subunit. Requires Zn(2+) as cofactor.

The chain is Small ribosomal subunit protein eS27 from Pyrobaculum neutrophilum (strain DSM 2338 / JCM 9278 / NBRC 100436 / V24Sta) (Thermoproteus neutrophilus).